Consider the following 211-residue polypeptide: Thiamine-phosphate synthase (211 aa).

Residues 37–41 (QLRIK) and asparagine 69 contribute to the 4-amino-2-methyl-5-(diphosphooxymethyl)pyrimidine site. Residues aspartate 70 and aspartate 89 each contribute to the Mg(2+) site. Position 108 (serine 108) interacts with 4-amino-2-methyl-5-(diphosphooxymethyl)pyrimidine. 134–136 (TQT) contributes to the 2-[(2R,5Z)-2-carboxy-4-methylthiazol-5(2H)-ylidene]ethyl phosphate binding site. Residue lysine 137 coordinates 4-amino-2-methyl-5-(diphosphooxymethyl)pyrimidine. 2-[(2R,5Z)-2-carboxy-4-methylthiazol-5(2H)-ylidene]ethyl phosphate is bound by residues glycine 166 and 186 to 187 (VS).

It belongs to the thiamine-phosphate synthase family. It depends on Mg(2+) as a cofactor.

It catalyses the reaction 2-[(2R,5Z)-2-carboxy-4-methylthiazol-5(2H)-ylidene]ethyl phosphate + 4-amino-2-methyl-5-(diphosphooxymethyl)pyrimidine + 2 H(+) = thiamine phosphate + CO2 + diphosphate. The enzyme catalyses 2-(2-carboxy-4-methylthiazol-5-yl)ethyl phosphate + 4-amino-2-methyl-5-(diphosphooxymethyl)pyrimidine + 2 H(+) = thiamine phosphate + CO2 + diphosphate. The catalysed reaction is 4-methyl-5-(2-phosphooxyethyl)-thiazole + 4-amino-2-methyl-5-(diphosphooxymethyl)pyrimidine + H(+) = thiamine phosphate + diphosphate. Its pathway is cofactor biosynthesis; thiamine diphosphate biosynthesis; thiamine phosphate from 4-amino-2-methyl-5-diphosphomethylpyrimidine and 4-methyl-5-(2-phosphoethyl)-thiazole: step 1/1. In terms of biological role, condenses 4-methyl-5-(beta-hydroxyethyl)thiazole monophosphate (THZ-P) and 2-methyl-4-amino-5-hydroxymethyl pyrimidine pyrophosphate (HMP-PP) to form thiamine monophosphate (TMP). The sequence is that of Thiamine-phosphate synthase from Shigella sonnei (strain Ss046).